We begin with the raw amino-acid sequence, 71 residues long: Sec-independent protein translocase protein TatA (71 aa).

A helical transmembrane segment spans residues 1–21 (MGASPVQLLIVLFIAVLVFGG).

Belongs to the TatA/E family. As to quaternary structure, the Tat system comprises two distinct complexes: a TatABC complex, containing multiple copies of TatA, TatB and TatC subunits, and a separate TatA complex, containing only TatA subunits. Substrates initially bind to the TatABC complex, which probably triggers association of the separate TatA complex to form the active translocon.

It is found in the cell inner membrane. In terms of biological role, part of the twin-arginine translocation (Tat) system that transports large folded proteins containing a characteristic twin-arginine motif in their signal peptide across membranes. TatA could form the protein-conducting channel of the Tat system. The chain is Sec-independent protein translocase protein TatA from Dichelobacter nodosus (strain VCS1703A).